Reading from the N-terminus, the 172-residue chain is Small ribosomal subunit protein uS13 (172 aa).

The tract at residues glycine 131–glycine 172 is disordered. Over residues threonine 134–alanine 163 the composition is skewed to low complexity.

The protein belongs to the universal ribosomal protein uS13 family. In terms of assembly, part of the 30S ribosomal subunit. Forms a loose heterodimer with protein S19. Forms two bridges to the 50S subunit in the 70S ribosome.

Its function is as follows. Located at the top of the head of the 30S subunit, it contacts several helices of the 16S rRNA. In the 70S ribosome it contacts the 23S rRNA (bridge B1a) and protein L5 of the 50S subunit (bridge B1b), connecting the 2 subunits; these bridges are implicated in subunit movement. This chain is Small ribosomal subunit protein uS13, found in Sulfurisphaera tokodaii (strain DSM 16993 / JCM 10545 / NBRC 100140 / 7) (Sulfolobus tokodaii).